Consider the following 383-residue polypeptide: Acetylornithine deacetylase (383 aa).

Histidine 80 lines the Zn(2+) pocket. Aspartate 82 is a catalytic residue. Aspartate 112 contributes to the Zn(2+) binding site. The active site involves glutamate 144. Zn(2+) is bound by residues glutamate 145, glutamate 169, and histidine 355.

The protein belongs to the peptidase M20A family. ArgE subfamily. Homodimer. Zn(2+) is required as a cofactor. Requires Co(2+) as cofactor. The cofactor is glutathione.

The protein resides in the cytoplasm. It carries out the reaction N(2)-acetyl-L-ornithine + H2O = L-ornithine + acetate. It participates in amino-acid biosynthesis; L-arginine biosynthesis; L-ornithine from N(2)-acetyl-L-ornithine (linear): step 1/1. Its function is as follows. Catalyzes the hydrolysis of the amide bond of N(2)-acetylated L-amino acids. Cleaves the acetyl group from N-acetyl-L-ornithine to form L-ornithine, an intermediate in L-arginine biosynthesis pathway, and a branchpoint in the synthesis of polyamines. This is Acetylornithine deacetylase from Escherichia coli O157:H7.